A 158-amino-acid polypeptide reads, in one-letter code: C-type lectin BfL-1 (158 aa).

Positions 1–21 (MGHFTFIGLCLLAMFLSLSGA) are cleaved as a signal peptide. Cystine bridges form between Cys-26–Cys-37, Cys-54–Cys-154, Cys-61–Cys-156, and Cys-129–Cys-146. The C-type lectin domain maps to 33-155 (KNGLCYKVFS…CAALRPFLCQ (123 aa)). Positions 119, 121, and 127 each coordinate Ca(2+). Residues 119–121 (QPD) carry the Galactose-binding motif. Asn-134 carries an N-linked (GlcNAc...) asparagine glycan. Ca(2+) contacts are provided by Asn-142 and Asp-143.

The protein belongs to the true venom lectin family. Homodimer; non-covalently linked. In terms of tissue distribution, expressed by the venom gland.

It is found in the secreted. In terms of biological role, galactose-binding lectin which recognizes specific carbohydrate structures and agglutinates a variety of animal cells by binding to cell-surface glycoproteins and glycolipids. May be a calcium-dependent lectin. This is C-type lectin BfL-1 from Bungarus fasciatus (Banded krait).